A 329-amino-acid polypeptide reads, in one-letter code: Catabolite control protein A (329 aa).

In terms of domain architecture, HTH lacI-type spans 1 to 57 (MTVTIYDVAREARVSMATVSRVVNGNQNVKPETRDKVNEVIKKLNYRPNAVARGLAS). A DNA-binding region (H-T-H motif) is located at residues 5-24 (IYDVAREARVSMATVSRVVN).

Its function is as follows. Global transcriptional regulator of carbon catabolite repression (CCR) and carbon catabolite activation (CCA), which ensures optimal energy usage under diverse conditions. The chain is Catabolite control protein A (ccpA) from Staphylococcus xylosus.